The following is a 714-amino-acid chain: Calpain-1 catalytic subunit (714 aa).

At serine 2 the chain carries N-acetylserine. The region spanning 55–354 (LFRDEAFPPV…FTRLEICNLT (300 aa)) is the Calpain catalytic domain. 2 residues coordinate Ca(2+): glutamine 109 and aspartate 114. Catalysis depends on residues cysteine 115, histidine 272, and asparagine 296. Ca(2+)-binding residues include asparagine 316, aspartate 318, and aspartate 323. Threonine 354 is subject to Phosphothreonine. Positions 355-526 (PDALKSRTIR…KSAGTVELDD (172 aa)) are domain III. Residues 527–542 (QIQANLPDEQVLSEEE) are linker. EF-hand domains are found at residues 541–576 (EEID…IISK), 585–618 (FSLE…NRIR), 615–650 (NRIR…AGFK), and 680–714 (VRLE…TMFA). A domain IV region spans residues 543 to 713 (IDENFKALFR…LFKWLQLTMF (171 aa)). Residues aspartate 598, aspartate 600, asparagine 602, lysine 604, glutamate 609, aspartate 628, aspartate 630, serine 632, serine 634, and glutamate 639 each contribute to the Ca(2+) site.

The protein belongs to the peptidase C2 family. In terms of assembly, forms a heterodimer with a small (regulatory) subunit CAPNS1. Requires Ca(2+) as cofactor. Undergoes calcium-induced successive autoproteolytic cleavages that generate a membrane-bound 78 kDa active form and an intracellular 75 kDa active form. Calpastatin reduces with high efficiency the transition from 78 kDa to 75 kDa calpain forms. Ubiquitous.

It is found in the cytoplasm. The protein localises to the cell membrane. It carries out the reaction Broad endopeptidase specificity.. Its activity is regulated as follows. Activated by micromolar concentrations of calcium and inhibited by calpastatin. Its function is as follows. Calcium-regulated non-lysosomal thiol-protease which catalyzes limited proteolysis of substrates involved in cytoskeletal remodeling and signal transduction. Proteolytically cleaves CTBP1 at 'Asn-375', 'Gly-387' and 'His-409'. Cleaves and activates caspase-7 (CASP7). This Homo sapiens (Human) protein is Calpain-1 catalytic subunit.